The sequence spans 585 residues: Sodium/calcium exchanger NCL (585 aa).

Transmembrane regions (helical) follow at residues 83–103 (VFLILVYGFLMFTAATYLSAG), 106–126 (LLLEILGPGIVGGLFLPMLGA), 149–169 (VSVGMGLLAGSTVMLLTVIWG), 212–232 (IMAISVIPFVIVQLPQMLGST), and 239–259 (VLIALILSVLMLISYCVYQVF). EF-hand domains are found at residues 299-334 (PDEHVIRKLFLTIDANNDGHLSAAELKALIIGISFE) and 339-374 (DKDDAVGKVLQDFDKTLDEQVDQEEFVRGIKQWLIQ). Ca(2+)-binding residues include Asp312, Asn314, Asp316, His318, Glu323, Asp352, Asp356, Gln358, and Glu363. Helical transmembrane passes span 427 to 447 (WITIKAALLLLLGAAIAAAFA) and 457 to 477 (FSAATGIPSFFISFIALPLAT). N-linked (GlcNAc...) asparagine glycosylation is present at Asn478. Helical transmembrane passes span 505-525 (CGGVTMNNILCLSVFLAIVYV), 532-552 (FSSEVLVILIVCLVMGGFASF), and 558-578 (LWTCFIAYLLYPFSLGLVYIL).

It belongs to the Ca(2+):cation antiporter (CaCA) (TC 2.A.19) family. Expressed in roots, leaves, stems, petals, stamens, ovules and siliques.

The protein localises to the cell membrane. It is found in the vacuole membrane. Functionally, possesses sodium/calcium exchanger (NCX) activity when expressed in a heterologous mammalian CHO-K1 cell system. Does not possess cation/proton exchanger (CAX) or sodium/proton (NHX) activity when expressed in a heterologous yeast cell system. Has the ability to bind calcium in vitro. Participates in the maintenance of calcium homeostasis. May play a role in auxin response, diurnal rhythm and flowering time. Involved in salt stress response. In Arabidopsis thaliana (Mouse-ear cress), this protein is Sodium/calcium exchanger NCL.